The sequence spans 254 residues: Axonemal dynein light intermediate polypeptide 1 (254 aa).

Positions 1–55 (MIPPADSLLKHDNPVLISKNTERKSPKSRPLKVSSPQTVLTAPVPPPPKPKTPLL) are disordered. Residues 175–245 (ALQAEQGKSD…KRTNQQLKAQ (71 aa)) are a coiled coil.

The protein belongs to the inner dynein arm light chain family.

The protein resides in the cell projection. The protein localises to the cilium. It localises to the flagellum. It is found in the dynein axonemal particle. Its subcellular location is the cytoplasm. Functionally, involved in sperm flagellum assembly. The polypeptide is Axonemal dynein light intermediate polypeptide 1 (Xenopus laevis (African clawed frog)).